The sequence spans 373 residues: Cystathionine gamma-synthase/O-acetylhomoserine (thiol)-lyase (373 aa).

Position 197 is an N6-(pyridoxal phosphate)lysine (Lys-197).

Belongs to the trans-sulfuration enzymes family. In terms of assembly, homotetramer. The cofactor is pyridoxal 5'-phosphate.

The protein localises to the cytoplasm. The enzyme catalyses O-acetyl-L-homoserine + L-cysteine = L,L-cystathionine + acetate + H(+). It catalyses the reaction O-acetyl-L-homoserine + hydrogen sulfide = L-homocysteine + acetate. It functions in the pathway amino-acid biosynthesis; L-methionine biosynthesis via de novo pathway. Functionally, catalyzes the formation of L-cystathionine from O-acetyl-L-homoserine and L-cysteine. Cannot use O-succinyl-L-homoserine as substrate. Also exhibits O-acetylhomoserine thiolyase activity, catalyzing the synthesis of L-homocysteine from O-acetyl-L-homoserine and sulfide. In Bacillus subtilis (strain 168), this protein is Cystathionine gamma-synthase/O-acetylhomoserine (thiol)-lyase (metI).